The sequence spans 284 residues: MEMO1 family protein MMP1387 (284 aa).

It belongs to the MEMO1 family.

The protein is MEMO1 family protein MMP1387 of Methanococcus maripaludis (strain DSM 14266 / JCM 13030 / NBRC 101832 / S2 / LL).